The primary structure comprises 277 residues: Large ribosomal subunit protein uL2 (277 aa).

The disordered stretch occupies residues 227–277 (VMNPVDHPHGGGEGRTSGGRHPVTPWGVPTKGKKTRSKTKASDRLIMRRRK). A compositionally biased stretch (basic and acidic residues) spans 266–277 (KASDRLIMRRRK).

This sequence belongs to the universal ribosomal protein uL2 family. In terms of assembly, part of the 50S ribosomal subunit. Forms a bridge to the 30S subunit in the 70S ribosome.

Functionally, one of the primary rRNA binding proteins. Required for association of the 30S and 50S subunits to form the 70S ribosome, for tRNA binding and peptide bond formation. It has been suggested to have peptidyltransferase activity; this is somewhat controversial. Makes several contacts with the 16S rRNA in the 70S ribosome. This chain is Large ribosomal subunit protein uL2, found in Magnetococcus marinus (strain ATCC BAA-1437 / JCM 17883 / MC-1).